Reading from the N-terminus, the 216-residue chain is Hexitol phosphatase A (216 aa).

Residue D9 is the Nucleophile of the active site. Residues D9 and D11 each contribute to the a divalent metal cation site. Substrate contacts are provided by residues 9–11, 106–107, and K138; these read DLD and TS. D11 (proton donor) is an active-site residue. An a divalent metal cation-binding site is contributed by D163.

Belongs to the HAD-like hydrolase superfamily. CbbY/CbbZ/Gph/YieH family. Requires Mg(2+) as cofactor. It depends on Mn(2+) as a cofactor. Co(2+) is required as a cofactor.

The enzyme catalyses sugar phosphate + H2O = sugar + phosphate.. The catalysed reaction is D-mannitol 1-phosphate + H2O = D-mannitol + phosphate. It catalyses the reaction D-sorbitol 6-phosphate + H2O = D-sorbitol + phosphate. Its function is as follows. Sugar-phosphate phosphohydrolase that appears to contribute to butanol tolerance. Catalyzes the dephosphorylation of D-mannitol 1-phosphate and D-sorbitol 6-phosphate. Is also able to dephosphorylate other sugar phosphates in vitro including ribose-5-phosphate (Rib5P), 2-deoxyribose-5-phosphate, fructose-1-phosphate (Fru1P), fructose-6-phosphate (Fru6P), and glucose-6-phosphate (Glu6P). Selectively hydrolyzes beta-D-glucose-1-phosphate (bGlu1P) and has no activity with the alpha form. The polypeptide is Hexitol phosphatase A (Escherichia coli (strain K12)).